Here is a 119-residue protein sequence, read N- to C-terminus: Holo-[acyl-carrier-protein] synthase (119 aa).

Residues Asp2 and Glu51 each coordinate Mg(2+).

Belongs to the P-Pant transferase superfamily. AcpS family. The cofactor is Mg(2+).

It localises to the cytoplasm. The enzyme catalyses apo-[ACP] + CoA = holo-[ACP] + adenosine 3',5'-bisphosphate + H(+). Transfers the 4'-phosphopantetheine moiety from coenzyme A to a Ser of acyl-carrier-protein. In Chlorobium luteolum (strain DSM 273 / BCRC 81028 / 2530) (Pelodictyon luteolum), this protein is Holo-[acyl-carrier-protein] synthase.